We begin with the raw amino-acid sequence, 332 residues long: Adenosine deaminase (332 aa).

Zn(2+)-binding residues include H12 and H14. Substrate is bound by residues H14, D16, and G170. Zn(2+) is bound at residue H197. E200 functions as the Proton donor in the catalytic mechanism. D278 is a Zn(2+) binding site. Substrate is bound at residue D279.

Belongs to the metallo-dependent hydrolases superfamily. Adenosine and AMP deaminases family. Adenosine deaminase subfamily. It depends on Zn(2+) as a cofactor.

It carries out the reaction adenosine + H2O + H(+) = inosine + NH4(+). The enzyme catalyses 2'-deoxyadenosine + H2O + H(+) = 2'-deoxyinosine + NH4(+). Its function is as follows. Catalyzes the hydrolytic deamination of adenosine and 2-deoxyadenosine. The sequence is that of Adenosine deaminase from Yersinia enterocolitica serotype O:8 / biotype 1B (strain NCTC 13174 / 8081).